The chain runs to 580 residues: Laccase-5 (580 aa).

Residues 1–25 (MDVTKSLLCFISFVAFLLFSSVAEA) form the signal peptide. 2 Plastocyanin-like domains span residues 34–150 (IIQA…PPAG) and 160–312 (RNVP…YKSA). Asn-80 is a glycosylation site (N-linked (GlcNAc...) asparagine). His-84, His-86, His-129, and His-131 together coordinate Cu cation. N-linked (GlcNAc...) asparagine glycosylation is found at Asn-189, Asn-300, Asn-340, Asn-392, Asn-402, Asn-410, and Asn-443. Positions 428–564 (DFPAKPPVKF…AMAFLVENGN (137 aa)) constitute a Plastocyanin-like 3 domain. The Cu cation site is built by His-481, His-484, His-486, His-543, Cys-544, His-545, and His-549.

This sequence belongs to the multicopper oxidase family. Cu cation serves as cofactor. As to expression, ubiquitous and constitutive.

Its subcellular location is the secreted. It is found in the extracellular space. It localises to the apoplast. The enzyme catalyses 4 hydroquinone + O2 = 4 benzosemiquinone + 2 H2O. Its function is as follows. Lignin degradation and detoxification of lignin-derived products. This is Laccase-5 (LAC5) from Arabidopsis thaliana (Mouse-ear cress).